A 148-amino-acid chain; its full sequence is Movement protein P1 (148 aa).

Functionally, transports viral genome to neighboring plant cells directly through plasmosdesmata, without any budding. The movement protein allows efficient cell to cell propagation, by bypassing the host cell wall barrier (Potential). Likely acts as a suppressor of RNA-mediated gene silencing, also known as post-transcriptional gene silencing (PTGS), a mechanism of plant viral defense that performs sequence-specific inhibition of viral mRNAs expression. This chain is Movement protein P1, found in Glycine max (Soybean).